A 61-amino-acid chain; its full sequence is Metallothionein-1A (61 aa).

M1 bears the N-acetylmethionine mark. The tract at residues 1 to 29 (MDPNCSCPTGGSCSCAGSCTCKACRCPSC) is beta. Residues C5, C7, C13, C15, C19, C21, C24, C26, C29, C33, C34, C36, C37, C41, C44, C48, C50, and C57 each coordinate a divalent metal cation. The tract at residues 30-61 (KKSCCSCCPVGCAKCAQGCVCKGASDKCSCCA) is alpha. S58 is subject to Phosphoserine. Residues C59 and C60 each contribute to the a divalent metal cation site.

Belongs to the metallothionein superfamily. Type 1 family. Monomer.

Metallothioneins have a high content of cysteine residues that bind various heavy metals; these proteins are transcriptionally regulated by both heavy metals and glucocorticoids. This Bos taurus (Bovine) protein is Metallothionein-1A (MT1A).